Here is a 99-residue protein sequence, read N- to C-terminus: MEQITLSFPASRALSGRALAGVVGSGDMEVLYTAAQSATLNVQITTSVDNSQARWQALFDRLNLINGLPAGQLIIHDFGATPGVARIRIEQVFEEAAHA.

An O-(phosphoribosyl dephospho-coenzyme A)serine modification is found at S25.

Post-translationally, covalently binds the prosthetic group of malonate decarboxylase.

Its subcellular location is the cytoplasm. Functionally, subunit of malonate decarboxylase, it is an acyl carrier protein to which acetyl and malonyl thioester residues are bound via a 2'-(5''-phosphoribosyl)-3'-dephospho-CoA prosthetic group and turn over during the catalytic mechanism. The sequence is that of Malonate decarboxylase acyl carrier protein (mdcC) from Klebsiella pneumoniae.